The following is a 494-amino-acid chain: Transcription factor SOX-9 (494 aa).

Disordered regions lie at residues 1–66 and 159–275; these read MNLL…ESDE and ERLR…FRDV. The segment covering 27-42 has biased composition (low complexity); it reads SDDSAGSPCPSGSGSD. 2 stretches are compositionally biased toward basic and acidic residues: residues 56–66 and 159–174; these read GDPDLKKESDE and ERLRVQHKKDHPDYKY. Residues 63–103 are dimerization (DIM); it reads ESDEDKFPVCIREAVSQVLKGYDWTLVPMPVRVNGSSKNKP. The PQA stretch occupies residues 63 to 103; sequence ESDEDKFPVCIREAVSQVLKGYDWTLVPMPVRVNGSSKNKP. At Ser64 the chain carries Phosphoserine. Positions 105–173 form a DNA-binding region, HMG box; it reads VKRPMNAFMV…QHKKDHPDYK (69 aa). Phosphoserine is present on Ser181. Residues 211-222 show a composition bias toward low complexity; that stretch reads SPQSSSSISEVH. The segment at 224–309 is transactivation domain (TAM); that stretch reads PGEHSGQSQG…LPPNGHPGVP (86 aa). Short sequence motifs (9aaTAD) lie at residues 277–286 and 292–300; these read IGELSSDVIS and DVNEFDQYL. Low complexity predominate over residues 326-337; the sequence is SSASSPAGAGHA. Residues 326-402 form a disordered region; the sequence is SSASSPAGAG…PQQQQQQQQQ (77 aa). Over residues 344 to 353 the composition is skewed to pro residues; sequence PQPPQPPAQP. A transactivation domain (TAC) region spans residues 372 to 494; it reads RPHIKTEQLS…QPVYTQLTRP (123 aa). Lys376 participates in a covalent cross-link: Glycyl lysine isopeptide (Lys-Gly) (interchain with G-Cter in SUMO). The span at 378-387 shows a compositional bias: polar residues; sequence EQLSPSHYSE. Residues 388–402 show a composition bias toward low complexity; it reads QQQHSPQQQQQQQQQ. Positions 445 to 453 match the 9aaTAD 3 motif; it reads GGLYSTFTY. Residues 462 to 494 form a disordered region; it reads YTPIADTSGVPSIPQTHSPQHWEQPVYTQLTRP. Over residues 470 to 494 the composition is skewed to polar residues; sequence GVPSIPQTHSPQHWEQPVYTQLTRP.

Interacts with SNAI2; triggers neural crest delamination in a phosphorylation dependent manner. Interacts with UBE2I. Phosphorylated at Ser-181 in the developing neural tube. Phosphorylation at either Ser-64 or Ser-181 is required for sumoylation, but phosphorylation is not dependent on sumoylation. Sumoylation is enhanced by PKA. Phosphorylation is required for interaction with SNAI2 to trigger neural crest delamination and for an efficient trunk neural crest delamination, whereas sumoylation plays a less significant role. Phosphorylation and sumoylation are induced by BMP signaling pathway. Post-translationally, sumoylated at Lys-376; phosphorylation at either Ser-64 or Ser-181 is required for sumoylation. Sumoylation is induced by BMP signaling pathway.

The protein localises to the nucleus. In terms of biological role, transcription factor that plays a key role in chondrocytes differentiation and skeletal development. Specifically binds the 5'-ACAAAG-3' DNA motif present in enhancers and super-enhancers and promotes expression of genes important for chondrogenesis, including COL2A1. Plays a central role in successive steps of chondrocyte differentiation. Absolutely required for precartilaginous condensation, the first step in chondrogenesis during which skeletal progenitors differentiate into prechondrocytes. Together with SOX5 and SOX6, required for overt chondrogenesis when condensed prechondrocytes differentiate into early stage chondrocytes, the second step in chondrogenesis. Later, required to direct hypertrophic maturation and block osteoblast differentiation of growth plate chondrocytes: maintains chondrocyte columnar proliferation, delays prehypertrophy and then prevents osteoblastic differentiation of chondrocytes. Also required for chondrocyte hypertrophy, both indirectly, by keeping the lineage fate of chondrocytes, and directly, by remaining present in upper hypertrophic cells. Low lipid levels are the main nutritional determinant for chondrogenic commitment of skeletal progenitor cells: when lipids levels are low, FOXO transcription factors promote expression of SOX9, which induces chondrogenic commitment and suppresses fatty acid oxidation. In addition to cartilage development, also acts as a regulator of proliferation and differentiation in epithelial stem/progenitor cells. In response to bone morphogenetic protein stimulus, phosphorylation is induced and then sumoylation, allowing cooperation with SNAI2 to trigger neural crest delamination. This chain is Transcription factor SOX-9, found in Gallus gallus (Chicken).